We begin with the raw amino-acid sequence, 475 residues long: Aspartate ammonia-lyase (475 aa).

Residues Thr104, Ser143, Thr144, Asn145, Thr190, and His191 each coordinate L-aspartate. Residues 320–329 are SS loop; that stretch reads GSSIMPGKVN. The active-site Proton acceptor is Ser321. L-aspartate-binding residues include Ser322 and Lys327.

This sequence belongs to the class-II fumarase/aspartase family. Aspartase subfamily. Homotetramer.

It carries out the reaction L-aspartate = fumarate + NH4(+). In terms of biological role, catalyzes the reversible conversion of L-aspartate to fumarate and ammonia. The sequence is that of Aspartate ammonia-lyase from Bacillus subtilis (strain 168).